The chain runs to 678 residues: Inositol-trisphosphate 3-kinase C (678 aa).

Disordered regions lie at residues 26-128 and 151-300; these read LEAL…RRNS and DLQS…LDLS. Over residues 44-58 the composition is skewed to gly residues; it reads PGAGGPTGRPEGGGP. Basic and acidic residues-rich tracts occupy residues 61–76 and 107–116; these read WIEE…RTDL and EKPRQNKELD. Position 160 is a phosphoserine (serine 160). Basic and acidic residues-rich tracts occupy residues 173-196 and 220-236; these read ELDR…DNLR and SGKE…HDTD. Residues 318 to 326 carry the Nuclear export signal motif; it reads LCPVPRLII. Positions 328–380 are disordered; sequence PETPEPEAQPVGPQSRIEGGTGGFSSASSFDESEDDLVAGGGGTSDPEDRAGS. Threonine 330 bears the Phosphothreonine mark. Serine 398 is subject to Phosphoserine. ATP contacts are provided by residues lysine 426, 466-468, and aspartate 479; that span reads EDL. Substrate is bound by residues lysine 481, 502–508, and 529–536; these read RKDMYEK and KPRYMQWR. The calmodulin-binding stretch occupies residues 504–512; sequence DMYEKMVAV. 2 residues coordinate ATP: lysine 553 and aspartate 633. Lysine 636 contributes to the substrate binding site.

This sequence belongs to the inositol phosphokinase (IPK) family.

The protein resides in the nucleus. The protein localises to the cytoplasm. It catalyses the reaction 1D-myo-inositol 1,4,5-trisphosphate + ATP = 1D-myo-inositol 1,3,4,5-tetrakisphosphate + ADP + H(+). Activated by calcium/calmodulin. Inhibited by high concentrations of the substrate Ins(1,2,4)P3, and allosterically activated by the product Ins(1,3,4,5)P4. In terms of biological role, catalyzes the phosphorylation of 1D-myo-inositol 1,4,5-trisphosphate (InsP3) into 1D-myo-inositol 1,3,4,5-tetrakisphosphate and participates to the regulation of calcium homeostasis. Can phosphorylate inositol 2,4,5-triphosphate to inositol 2,4,5,6-tetraphosphate. This chain is Inositol-trisphosphate 3-kinase C (Itpkc), found in Mus musculus (Mouse).